Reading from the N-terminus, the 137-residue chain is Large ribosomal subunit protein uL16 (137 aa).

Belongs to the universal ribosomal protein uL16 family. As to quaternary structure, part of the 50S ribosomal subunit.

Functionally, binds 23S rRNA and is also seen to make contacts with the A and possibly P site tRNAs. The sequence is that of Large ribosomal subunit protein uL16 from Alcanivorax borkumensis (strain ATCC 700651 / DSM 11573 / NCIMB 13689 / SK2).